A 140-amino-acid polypeptide reads, in one-letter code: Nucleoside diphosphate kinase (140 aa).

Residues lysine 11, phenylalanine 59, arginine 87, threonine 93, arginine 104, and asparagine 114 each coordinate ATP. Residue histidine 117 is the Pros-phosphohistidine intermediate of the active site.

It belongs to the NDK family. Homotetramer. It depends on Mg(2+) as a cofactor.

It is found in the cytoplasm. The catalysed reaction is a 2'-deoxyribonucleoside 5'-diphosphate + ATP = a 2'-deoxyribonucleoside 5'-triphosphate + ADP. The enzyme catalyses a ribonucleoside 5'-diphosphate + ATP = a ribonucleoside 5'-triphosphate + ADP. In terms of biological role, major role in the synthesis of nucleoside triphosphates other than ATP. The ATP gamma phosphate is transferred to the NDP beta phosphate via a ping-pong mechanism, using a phosphorylated active-site intermediate. The chain is Nucleoside diphosphate kinase from Bartonella tribocorum (strain CIP 105476 / IBS 506).